A 758-amino-acid polypeptide reads, in one-letter code: Photosystem I P700 chlorophyll a apoprotein A1 (758 aa).

Transmembrane regions (helical) follow at residues 78–101, 164–187, 203–227, 299–317, 354–377, 393–419, 441–463, and 539–557; these read VFSAHFGQLSIIFLWLSGMYFHGA, LYCTAIGALVFAGLMLFAGWFHYH, LNHHLAGLLGLGSLSWARHQVHVSL, IAHHHLAIAILFLIAGHMY, WHAQLSINLAMLGSLTIVVAQHMY, LSLFTHHMWIGGFLIVGAAAHAAIFMV, AIISHLNWVCIFLGFHSFGLYIH, and FLVHHIHAFTIHVTVLILL. C581 and C590 together coordinate [4Fe-4S] cluster. 2 helical membrane-spanning segments follow: residues 597–618 and 672–694; these read HVFLGLFWMYNSISVVIFHFSW and LSAYGLFFLGAHFVWAFSLMFLF. H683 is a chlorophyll a' binding site. Positions 691 and 699 each coordinate chlorophyll a. W700 contributes to the phylloquinone binding site. Residues 732–753 form a helical membrane-spanning segment; it reads AVGVTHYLLGGIATTWAFFLAR.

Belongs to the PsaA/PsaB family. The PsaA/B heterodimer binds the P700 chlorophyll special pair and subsequent electron acceptors. PSI consists of a core antenna complex that captures photons, and an electron transfer chain that converts photonic excitation into a charge separation. The eukaryotic PSI reaction center is composed of at least 11 subunits. It depends on P700 is a chlorophyll a/chlorophyll a' dimer, A0 is one or more chlorophyll a, A1 is one or both phylloquinones and FX is a shared 4Fe-4S iron-sulfur center. as a cofactor.

It localises to the plastid. Its subcellular location is the chloroplast thylakoid membrane. It catalyses the reaction reduced [plastocyanin] + hnu + oxidized [2Fe-2S]-[ferredoxin] = oxidized [plastocyanin] + reduced [2Fe-2S]-[ferredoxin]. PsaA and PsaB bind P700, the primary electron donor of photosystem I (PSI), as well as the electron acceptors A0, A1 and FX. PSI is a plastocyanin-ferredoxin oxidoreductase, converting photonic excitation into a charge separation, which transfers an electron from the donor P700 chlorophyll pair to the spectroscopically characterized acceptors A0, A1, FX, FA and FB in turn. Oxidized P700 is reduced on the lumenal side of the thylakoid membrane by plastocyanin. This Pisum sativum (Garden pea) protein is Photosystem I P700 chlorophyll a apoprotein A1.